We begin with the raw amino-acid sequence, 429 residues long: Enolase (429 aa).

Residue glutamine 163 participates in (2R)-2-phosphoglycerate binding. Residue glutamate 205 is the Proton donor of the active site. Mg(2+)-binding residues include aspartate 242, glutamate 285, and aspartate 312. 4 residues coordinate (2R)-2-phosphoglycerate: lysine 337, arginine 366, serine 367, and lysine 388. The Proton acceptor role is filled by lysine 337.

The protein belongs to the enolase family. The cofactor is Mg(2+).

It is found in the cytoplasm. Its subcellular location is the secreted. It localises to the cell surface. It catalyses the reaction (2R)-2-phosphoglycerate = phosphoenolpyruvate + H2O. It participates in carbohydrate degradation; glycolysis; pyruvate from D-glyceraldehyde 3-phosphate: step 4/5. In terms of biological role, catalyzes the reversible conversion of 2-phosphoglycerate (2-PG) into phosphoenolpyruvate (PEP). It is essential for the degradation of carbohydrates via glycolysis. This Oceanobacillus iheyensis (strain DSM 14371 / CIP 107618 / JCM 11309 / KCTC 3954 / HTE831) protein is Enolase.